The chain runs to 290 residues: MQQQIGIFEAIVLGFVQGITEYFPISSTAHLRVVPALLGWADPGTAYSAVIQLGSLLAVLTYFYKDLVEILSGTVRALRTGDTQSREVRLFWGIILGTIPIVIAGLALKSTLEAPGSPLRALSVIAVASIVMAALLWLSESLGKRTRTMKGIRVIDGILIGCAQALALVPGVSRSGSTLTAALFLGFQRADGARFSFLLAIPAIFLSGLLELKVLVDEGFSGGIGPIVAGFVSSTVFSYLAIAWLLKFLQTRSTLVFVIYRFFFGALLLGLLAAGLLPDIEPVRQALNLP.

The next 8 membrane-spanning stretches (helical) occupy residues 5–25 (IGIFEAIVLGFVQGITEYFPI), 44–64 (GTAYSAVIQLGSLLAVLTYFY), 88–108 (VRLFWGIILGTIPIVIAGLAL), 122–142 (LSVIAVASIVMAALLWLSESL), 152–172 (IRVIDGILIGCAQALALVPGV), 195–215 (FSFLLAIPAIFLSGLLELKVL), 226–246 (PIVAGFVSSTVFSYLAIAWLL), and 255–275 (LVFVIYRFFFGALLLGLLAAG).

This sequence belongs to the UppP family.

The protein resides in the cell inner membrane. It catalyses the reaction di-trans,octa-cis-undecaprenyl diphosphate + H2O = di-trans,octa-cis-undecaprenyl phosphate + phosphate + H(+). Its function is as follows. Catalyzes the dephosphorylation of undecaprenyl diphosphate (UPP). Confers resistance to bacitracin. In Gloeobacter violaceus (strain ATCC 29082 / PCC 7421), this protein is Undecaprenyl-diphosphatase.